Here is a 767-residue protein sequence, read N- to C-terminus: 5-methyltetrahydropteroyltriglutamate--homocysteine methyltransferase (767 aa).

K126 provides a ligand contact to 5-methyltetrahydropteroyltri-L-glutamate. L-homocysteine-binding positions include 445 to 447 and E498; that span reads IGS. L-methionine is bound by residues 445 to 447 and E498; that span reads IGS. 5-methyltetrahydropteroyltri-L-glutamate is bound by residues 529-530 and W575; that span reads RC. D613 lines the L-homocysteine pocket. An L-methionine-binding site is contributed by D613. Position 619 (E619) interacts with 5-methyltetrahydropteroyltri-L-glutamate. Zn(2+) contacts are provided by H655, C657, and E679. The active-site Proton donor is the H708. C740 is a binding site for Zn(2+).

The protein belongs to the vitamin-B12 independent methionine synthase family. Requires Zn(2+) as cofactor.

The enzyme catalyses 5-methyltetrahydropteroyltri-L-glutamate + L-homocysteine = tetrahydropteroyltri-L-glutamate + L-methionine. The protein operates within amino-acid biosynthesis; L-methionine biosynthesis via de novo pathway; L-methionine from L-homocysteine (MetE route): step 1/1. In terms of biological role, catalyzes the transfer of a methyl group from 5-methyltetrahydrofolate to homocysteine resulting in methionine formation. The chain is 5-methyltetrahydropteroyltriglutamate--homocysteine methyltransferase from Psychromonas ingrahamii (strain DSM 17664 / CCUG 51855 / 37).